We begin with the raw amino-acid sequence, 851 residues long: Protein FAM13B (851 aa).

The region spanning 23–212 (IPLDELQQGG…GLLENYYEFF (190 aa)) is the Rho-GAP domain. Over residues 556–565 (IKDAKHKNSD) the composition is skewed to basic and acidic residues. Positions 556–611 (IKDAKHKNSDGEFAPQTRPRSNTLPKSFGSSLDHEDGESEGEPRVIQKEKTPSKEA) are disordered. The span at 573–585 (RPRSNTLPKSFGS) shows a compositional bias: polar residues. Positions 596–611 (GEPRVIQKEKTPSKEA) are enriched in basic and acidic residues.

It belongs to the FAM13 family.

The sequence is that of Protein FAM13B (Fam13b) from Mus musculus (Mouse).